The sequence spans 562 residues: Arginine--tRNA ligase (562 aa).

Residues 129-139 (ANPTGPLHVGH) carry the 'HIGH' region motif.

It belongs to the class-I aminoacyl-tRNA synthetase family. Monomer.

The protein resides in the cytoplasm. It catalyses the reaction tRNA(Arg) + L-arginine + ATP = L-arginyl-tRNA(Arg) + AMP + diphosphate. The sequence is that of Arginine--tRNA ligase from Xylella fastidiosa (strain M23).